The chain runs to 521 residues: Fucosyltransferase 3 (521 aa).

Over residues 1–12 (MKRGKKNSDAGD) the composition is skewed to basic and acidic residues. The tract at residues 1–29 (MKRGKKNSDAGDRLTNSDTRTGSSELNAM) is disordered. Residues 1–39 (MKRGKKNSDAGDRLTNSDTRTGSSELNAMMKPSLSSMKT) lie on the Cytoplasmic side of the membrane. The span at 14 to 26 (LTNSDTRTGSSEL) shows a compositional bias: polar residues. A helical; Signal-anchor for type II membrane protein transmembrane segment spans residues 40 to 60 (MGLLLAVLMVASVMFSLSVVL). The Lumenal segment spans residues 61–521 (RDPPSDDVIE…QATLFHGCKD (461 aa)). N152, N222, and N493 each carry an N-linked (GlcNAc...) asparagine glycan.

The protein belongs to the glycosyltransferase 37 family. As to expression, expressed in roots, stems, leaves, flowers, siliques and seedlings.

The protein resides in the golgi apparatus. Its subcellular location is the golgi stack membrane. Its pathway is protein modification; protein glycosylation. Functionally, may be involved in cell wall biosynthesis. May act as a fucosyltransferase. The polypeptide is Fucosyltransferase 3 (FUT3) (Arabidopsis thaliana (Mouse-ear cress)).